The primary structure comprises 1011 residues: Liprin-beta-1 (1011 aa).

Serine 37 is subject to Phosphoserine. Threonine 39 is subject to Phosphothreonine. Serine 40 bears the Phosphoserine mark. Positions 156–405 (QQELLSRTSL…VPEEFHTTIL (250 aa)) form a coiled coil. An N6-acetyllysine modification is found at lysine 322. Disordered regions lie at residues 420–439 (ETSE…EEND) and 463–634 (KSSS…RDLG). Phosphoserine occurs at positions 434 and 466. The span at 470–492 (LKKETSDGEKETIQKTSEDRAPA) shows a compositional bias: basic and acidic residues. A Glycyl lysine isopeptide (Lys-Gly) (interchain with G-Cter in SUMO2) cross-link involves residue lysine 471. Residues serine 523 and serine 540 each carry the phosphoserine modification. The segment covering 546-556 (ETEKETAEHLD) has biased composition (basic and acidic residues). Serine 579 is modified (phosphoserine). Positions 584–598 (KKSRGIMKLFGKLRR) are enriched in basic residues. Serine 601 and serine 636 each carry phosphoserine. SAM domains lie at 647-711 (WTKE…LGSE) and 719-782 (LDFN…LRIN). Serine 794 carries the post-translational modification Phosphoserine. The SAM 3 domain maps to 804–876 (VQKWTNHRVM…ATHFNLLIGA (73 aa)). Phosphoserine occurs at positions 999, 1001, and 1003. Position 1005 is a phosphothreonine (threonine 1005).

It belongs to the liprin family. Liprin-beta subfamily. Forms homodimers and heterodimers. Interacts with S100A4 in a Ca(2+)-dependent mode. Part of a cortical microtubule stabilization complex (CMSC) composed of KANK1, PPFIA1, PPFIBP1, ERC1/ELKS, PHLDB2/LL5beta, CLASPs, KIF21A and possibly additional interactors; within CMSCs KANK1 and PHLDB2/LL5beta seem to be the core components for recruiting microtubule-binding proteins KIF21A and CLASPs, whereas PPFIA1, PPFIBP1 and ERC1/ELKS serve as scaffolds for protein clustering. Interacts with KANK1 (via CC1 domain, residues 244-339). As to expression, widely expressed. Absent in liver.

Its subcellular location is the cytoplasm. It localises to the cell cortex. May regulate the disassembly of focal adhesions. Did not bind receptor-like tyrosine phosphatases type 2A. The protein is Liprin-beta-1 (PPFIBP1) of Homo sapiens (Human).